The following is a 59-amino-acid chain: Potassium channel toxin alpha-KTx 1.2 (59 aa).

The first 22 residues, 1–22 (MKILSVLLLALIICSIIDWSEG), serve as a signal peptide directing secretion. Gln-23 carries the post-translational modification Pyrrolidone carboxylic acid. 3 disulfides stabilise this stretch: Cys-29–Cys-50, Cys-35–Cys-55, and Cys-39–Cys-57. An interaction with Ca(2+)-activated K(+) channels region spans residues 48 to 55 (GKCMNKKC).

It belongs to the short scorpion toxin superfamily. Potassium channel inhibitor family. Alpha-KTx 01 subfamily. Expressed by the venom gland.

Its subcellular location is the secreted. Functionally, blocks calcium-activated potassium channels (Kd=43 nM on KCa1.1/KCNMA1). Has a potent presynaptic facilitatory action, with less effect on direct muscle stimulation. The sequence is that of Potassium channel toxin alpha-KTx 1.2 from Leiurus hebraeus (Hebrew deathstalker scorpion).